Reading from the N-terminus, the 383-residue chain is Na(+)/H(+) antiporter NhaA (383 aa).

11 consecutive transmembrane segments (helical) span residues 14–34 (AGGILLVIAAAIAMTIANSPL), 47–67 (FGMSVSHWINDGLMAVFFLLI), 87–107 (IFPAIAAVGGMLAPALIYVAF), 117–137 (GWAIPAATDIAFALGIIALLG), 146–166 (VFLLALAIIDDLGVVVIIALF), 171–191 (LSTMALLVGFIMTGVLFMLNA), 205–225 (AILWFAVLKSGVHATLAGVVI), 252–272 (VAFGILPLFAFANAGISLEGV), 280–300 (MLPLGIALGLLVGKPLGIFTF), 321–341 (IFAVSVLCGIGFTMSIFISSL), and 356–376 (LGILMGSTTAALLGYALLHFS).

This sequence belongs to the NhaA Na(+)/H(+) (TC 2.A.33) antiporter family.

It is found in the cell inner membrane. It carries out the reaction Na(+)(in) + 2 H(+)(out) = Na(+)(out) + 2 H(+)(in). Na(+)/H(+) antiporter that extrudes sodium in exchange for external protons. This Vibrio alginolyticus protein is Na(+)/H(+) antiporter NhaA.